Here is an 86-residue protein sequence, read N- to C-terminus: Large ribosomal subunit protein eL43 (86 aa).

Zn(2+) contacts are provided by Cys-38, Cys-41, Cys-56, and Cys-59. Residues 38-59 (CPVCGRKAVRRISTGIWQCQKC) form a C4-type zinc finger.

Belongs to the eukaryotic ribosomal protein eL43 family. Part of the 50S ribosomal subunit. The cofactor is Zn(2+).

The protein is Large ribosomal subunit protein eL43 of Thermococcus kodakarensis (strain ATCC BAA-918 / JCM 12380 / KOD1) (Pyrococcus kodakaraensis (strain KOD1)).